Here is a 363-residue protein sequence, read N- to C-terminus: Homeobox protein Hox-A2a (363 aa).

Disordered stretches follow at residues 30–88 (DSFQ…LPPE), 98–117 (SKRNHLPNSTTTTISNGPVC), 189–220 (RMKHKRQTQSKENHNAEGKGPSTEEGIHSDEE), and 268–308 (DKNL…LDVS). The segment covering 31-44 (SFQSSSIKSSTLSR) has biased composition (polar residues). An Antp-type hexapeptide motif is present at residues 88–93 (EYPWMR). Over residues 103 to 113 (LPNSTTTTISN) the composition is skewed to polar residues. Residues 137-196 (SRRLRTAYTNTQLLELEKEFHFNKYLCRPRRVEIAALLDLTERQVKVWFQNRRMKHKRQT) constitute a DNA-binding region (homeobox).

Belongs to the Antp homeobox family. Proboscipedia subfamily.

Its subcellular location is the nucleus. Sequence-specific transcription factor which is part of a developmental regulatory system that provides cells with specific positional identities on the anterior-posterior axis. The chain is Homeobox protein Hox-A2a (hoxa2a) from Takifugu rubripes (Japanese pufferfish).